The chain runs to 227 residues: NAD(P)H-quinone oxidoreductase subunit K, chloroplastic (227 aa).

[4Fe-4S] cluster-binding residues include C43, C44, C108, and C139.

The protein belongs to the complex I 20 kDa subunit family. In terms of assembly, NDH is composed of at least 16 different subunits, 5 of which are encoded in the nucleus. Requires [4Fe-4S] cluster as cofactor.

The protein localises to the plastid. Its subcellular location is the chloroplast thylakoid membrane. It catalyses the reaction a plastoquinone + NADH + (n+1) H(+)(in) = a plastoquinol + NAD(+) + n H(+)(out). The enzyme catalyses a plastoquinone + NADPH + (n+1) H(+)(in) = a plastoquinol + NADP(+) + n H(+)(out). NDH shuttles electrons from NAD(P)H:plastoquinone, via FMN and iron-sulfur (Fe-S) centers, to quinones in the photosynthetic chain and possibly in a chloroplast respiratory chain. The immediate electron acceptor for the enzyme in this species is believed to be plastoquinone. Couples the redox reaction to proton translocation, and thus conserves the redox energy in a proton gradient. This chain is NAD(P)H-quinone oxidoreductase subunit K, chloroplastic, found in Ranunculus macranthus (Large buttercup).